A 477-amino-acid polypeptide reads, in one-letter code: D-alanyl-D-alanine carboxypeptidase DacB (477 aa).

Positions 1–20 are cleaved as a signal peptide; that stretch reads MRFSRFIIGLTSCIAFSVQA. Ser62 functions as the Acyl-ester intermediate in the catalytic mechanism. Lys65 acts as the Proton acceptor in catalysis. Residues 90-263 are absent in class-A beta-lactamases; it reads GNVENGVLKG…YAGAILKDEL (174 aa). Residue Ser306 is part of the active site. Lys417 contacts substrate.

The protein belongs to the peptidase S13 family.

It is found in the periplasm. The catalysed reaction is Preferential cleavage: (Ac)2-L-Lys-D-Ala-|-D-Ala. Also transpeptidation of peptidyl-alanyl moieties that are N-acyl substituents of D-alanine.. The protein operates within cell wall biogenesis; peptidoglycan biosynthesis. Functionally, not involved in transpeptidation but exclusively catalyzes a DD-carboxypeptidase and DD-endopeptidase reaction. The sequence is that of D-alanyl-D-alanine carboxypeptidase DacB (dacB) from Escherichia coli (strain K12).